The primary structure comprises 117 residues: Large ribosomal subunit protein bL20c (117 aa).

This sequence belongs to the bacterial ribosomal protein bL20 family.

The protein localises to the plastid. Its subcellular location is the chloroplast. Functionally, binds directly to 23S ribosomal RNA and is necessary for the in vitro assembly process of the 50S ribosomal subunit. It is not involved in the protein synthesizing functions of that subunit. This chain is Large ribosomal subunit protein bL20c, found in Gossypium hirsutum (Upland cotton).